A 334-amino-acid chain; its full sequence is Formamidase (334 aa).

The 247-residue stretch at 14 to 260 folds into the CN hydrolase domain; the sequence is FLVAAIQFPV…WEIVTGEIYP (247 aa). The active-site Proton acceptor is Glu60. Lys133 acts as the Proton donor in catalysis. The active-site Nucleophile is the Cys166.

Belongs to the carbon-nitrogen hydrolase superfamily. Aliphatic amidase family.

The enzyme catalyses formamide + H2O = formate + NH4(+). Is an aliphatic amidase with a restricted substrate specificity, as it only hydrolyzes formamide. The sequence is that of Formamidase from Helicobacter acinonychis (strain Sheeba).